A 461-amino-acid polypeptide reads, in one-letter code: Ornithine decarboxylase (461 aa).

Lysine 69 carries the N6-(pyridoxal phosphate)lysine modification. Pyridoxal 5'-phosphate-binding positions include serine 200, glycine 237, and 274-277 (EPGR). Serine 303 carries the phosphoserine; by CK2 modification. 331–332 (YD) is a binding site for substrate. Cysteine 360 functions as the Proton donor; shared with dimeric partner in the catalytic mechanism. Residue cysteine 360 is modified to S-nitrosocysteine. Aspartate 361 provides a ligand contact to substrate. Residue tyrosine 389 coordinates pyridoxal 5'-phosphate.

This sequence belongs to the Orn/Lys/Arg decarboxylase class-II family. Homodimer. Only the dimer is catalytically active, as the active sites are constructed of residues from both monomers. It depends on pyridoxal 5'-phosphate as a cofactor.

It catalyses the reaction L-ornithine + H(+) = putrescine + CO2. Its pathway is amine and polyamine biosynthesis; putrescine biosynthesis via L-ornithine pathway; putrescine from L-ornithine: step 1/1. With respect to regulation, inhibited by antizymes (AZs) OAZ1, OAZ2 and OAZ3 in response to polyamine levels. AZs inhibit the assembly of the functional homodimer by binding to ODC monomers. Additionally, OAZ1 targets ODC monomers for ubiquitin-independent proteolytic destruction by the 26S proteasome. Catalyzes the first and rate-limiting step of polyamine biosynthesis that converts ornithine into putrescine, which is the precursor for the polyamines, spermidine and spermine. Polyamines are essential for cell proliferation and are implicated in cellular processes, ranging from DNA replication to apoptosis. This Rattus norvegicus (Rat) protein is Ornithine decarboxylase (Odc1).